We begin with the raw amino-acid sequence, 278 residues long: OX-2 membrane glycoprotein (278 aa).

An N-terminal signal peptide occupies residues 1 to 30; that stretch reads MERLVIRMPFSHLSTYSLVWVMAAVVLCTA. One can recognise an Ig-like V-type domain in the interval 31 to 141; sequence QVQVVTQDER…SGTACLTVYV (111 aa). The Extracellular segment spans residues 31 to 232; it reads QVQVVTQDER…TDFKQTVNKG (202 aa). 2 cysteine pairs are disulfide-bonded: Cys51–Cys121 and Cys118–Cys136. Residues Asn95, Asn103, and Asn110 are each glycosylated (N-linked (GlcNAc...) asparagine). One can recognise an Ig-like C2-type domain in the interval 142–232; sequence QPIVSLHYKF…TDFKQTVNKG (91 aa). N-linked (GlcNAc...) asparagine glycosylation is found at Asn157, Asn181, and Asn190. Cys160 and Cys214 are joined by a disulfide. Residues 233-259 traverse the membrane as a helical segment; the sequence is YWFSVPLLLSIVSLVILLVLISILLYW. At 260–278 the chain is on the cytoplasmic side; that stretch reads KRHRNQDRGELSQGVQKMT.

CD200 and CD200R1 interact via their respective N-terminal Ig-like domains.

It is found in the cell membrane. In terms of biological role, costimulates T-cell proliferation. May regulate myeloid cell activity in a variety of tissues. The chain is OX-2 membrane glycoprotein (CD200) from Homo sapiens (Human).